Consider the following 434-residue polypeptide: Fez family zinc finger protein 2 (434 aa).

An Engrailed homology 1 repressor motif is present at residues 27 to 42 (SLAFSIERIMAKTSEP). C2H2-type zinc fingers lie at residues 253 to 275 (FTCEVCGKVFNAHYNLTRHMPVH), 281 to 303 (FVCKVCGKGFRQASTLCRHKIIH), 309 to 331 (HKCNQCGKAFNRSSTLNTHIRIH), 337 to 359 (FVCEFCGKGFHQKGNYKNHKLTH), 365 to 387 (YKCSICNKAFHQVYNLTFHMHTH), and 393 to 416 (FTCATCGKGFCRNFDLKKHVRKLH).

Belongs to the krueppel C2H2-type zinc-finger protein family.

It is found in the nucleus. Functionally, transcription repressor. Component of the regulatory cascade that controls the development of dopaminergic (DA) and serotonergic (5HT) neurons. In Xenopus laevis (African clawed frog), this protein is Fez family zinc finger protein 2 (fezf2).